The chain runs to 371 residues: Putative glutamate--cysteine ligase 2 (371 aa).

The protein belongs to the glutamate--cysteine ligase type 2 family. YbdK subfamily.

It catalyses the reaction L-cysteine + L-glutamate + ATP = gamma-L-glutamyl-L-cysteine + ADP + phosphate + H(+). Its function is as follows. ATP-dependent carboxylate-amine ligase which exhibits weak glutamate--cysteine ligase activity. In Cupriavidus pinatubonensis (strain JMP 134 / LMG 1197) (Cupriavidus necator (strain JMP 134)), this protein is Putative glutamate--cysteine ligase 2.